The sequence spans 319 residues: Protein sprouty homolog 1 (319 aa).

Met1 is subject to N-acetylmethionine. Disordered regions lie at residues 54–78 (TEGP…ERTH) and 100–160 (AVLP…QPKQ). Residues 69-78 (PRQEKHERTH) show a composition bias toward basic and acidic residues. Positions 112–131 (SRSTSTGSAASSGSNSSASS) are enriched in low complexity. Residues 183-295 (QCGKCKCGEC…CYDWIHRPGC (113 aa)) enclose the SPR domain.

It belongs to the sprouty family. As to quaternary structure, forms heterodimers with SPRY2. Interacts with TESK1. Interacts with CAV1 (via C-terminus).

It localises to the cytoplasm. Its subcellular location is the membrane. Inhibits fibroblast growth factor (FGF)-induced retinal lens fiber differentiation, probably by inhibiting FGF-mediated phosphorylation of ERK1/2. Inhibits TGFB-induced epithelial-to-mesenchymal transition in lens epithelial cells. This Homo sapiens (Human) protein is Protein sprouty homolog 1 (SPRY1).